Reading from the N-terminus, the 249-residue chain is ATP synthase subunit a (249 aa).

Helical transmembrane passes span 33–53 (GQVIAVSWIVFAILIIASIAA), 92–112 (LPFIGTLFLFIFVSNWLGALI), 131–151 (INTTVALALLTSLAYFYAGIS), 196–216 (LVVAVLVFLVPLVVPLPLMAL), and 217–237 (GLFTSAIQALVFATLAGAYIH).

The protein belongs to the ATPase A chain family. In terms of assembly, F-type ATPases have 2 components, CF(1) - the catalytic core - and CF(0) - the membrane proton channel. CF(1) has five subunits: alpha(3), beta(3), gamma(1), delta(1), epsilon(1). CF(0) has four main subunits: a, b, b' and c.

Its subcellular location is the cellular thylakoid membrane. Its function is as follows. Key component of the proton channel; it plays a direct role in the translocation of protons across the membrane. This is ATP synthase subunit a from Microcystis aeruginosa (strain NIES-843 / IAM M-2473).